Consider the following 152-residue polypeptide: Succinate dehydrogenase [ubiquinone] cytochrome b small subunit A, mitochondrial (152 aa).

The N-terminal 21 residues, 1 to 21, are a transit peptide targeting the mitochondrion; it reads MVTVLRLSSLCRANRASAFKS. The Mitochondrial matrix segment spans residues 22–56; that stretch reads LLIRPVPCLSQDLHTVQTSQIHTSQNHHAASKAAS. The chain crosses the membrane as a helical span at residues 57 to 78; it reads LHWTSERALSVALLGLLPAAYL. The Mitochondrial intermembrane portion of the chain corresponds to 79 to 83; it reads YPGAA. A helical membrane pass occupies residues 84 to 104; sequence VDYSLAAALTLHGHWGLGQVV. His95 contributes to the heme b binding site. Residues 105 to 113 lie on the Mitochondrial matrix side of the membrane; that stretch reads TDYVHGDAK. Tyr107 contacts a ubiquinone. Residues 114–135 form a helical membrane-spanning segment; sequence IKLANTSLFALSALTFAGLCYF. Over 136 to 152 the chain is Mitochondrial intermembrane; that stretch reads NYHDVGICKAVAMLWSL.

Belongs to the CybS family. Component of complex II composed of four subunits: the flavoprotein (FP) SDHA, iron-sulfur protein (IP) SDHB, and a cytochrome b560 composed of SDHC and SDHD.

The protein localises to the mitochondrion inner membrane. It functions in the pathway carbohydrate metabolism; tricarboxylic acid cycle. Membrane-anchoring subunit of succinate dehydrogenase (SDH) that is involved in complex II of the mitochondrial electron transport chain and is responsible for transferring electrons from succinate to ubiquinone (coenzyme Q). SDH also oxidizes malate to the non-canonical enol form of oxaloacetate, enol-oxaloacetate. Enol-oxaloacetate, which is a potent inhibitor of the succinate dehydrogenase activity, is further isomerized into keto-oxaloacetate. This Xenopus laevis (African clawed frog) protein is Succinate dehydrogenase [ubiquinone] cytochrome b small subunit A, mitochondrial (sdhd-a).